The following is a 394-amino-acid chain: Tryptophan synthase beta chain (394 aa).

Lys84 bears the N6-(pyridoxal phosphate)lysine mark.

Belongs to the TrpB family. Tetramer of two alpha and two beta chains. Requires pyridoxal 5'-phosphate as cofactor.

It carries out the reaction (1S,2R)-1-C-(indol-3-yl)glycerol 3-phosphate + L-serine = D-glyceraldehyde 3-phosphate + L-tryptophan + H2O. It functions in the pathway amino-acid biosynthesis; L-tryptophan biosynthesis; L-tryptophan from chorismate: step 5/5. Its function is as follows. The beta subunit is responsible for the synthesis of L-tryptophan from indole and L-serine. The sequence is that of Tryptophan synthase beta chain from Clostridium acetobutylicum (strain ATCC 824 / DSM 792 / JCM 1419 / IAM 19013 / LMG 5710 / NBRC 13948 / NRRL B-527 / VKM B-1787 / 2291 / W).